Consider the following 329-residue polypeptide: uncharacterized protein (329 aa).

The next 2 helical transmembrane spans lie at 13–35 (IPVLIISLITLVASAYALYWATI) and 229–248 (VIPAALCTVSIIFAGLSVVY).

The protein resides in the cell membrane. This is an uncharacterized protein from Archaeoglobus fulgidus (strain ATCC 49558 / DSM 4304 / JCM 9628 / NBRC 100126 / VC-16).